Consider the following 369-residue polypeptide: CCA-adding enzyme (369 aa).

ATP-binding residues include glycine 8 and arginine 11. Positions 8 and 11 each coordinate CTP. Mg(2+) is bound by residues aspartate 21 and aspartate 23. Arginine 91, arginine 137, and arginine 140 together coordinate ATP. Residues arginine 91, arginine 137, and arginine 140 each coordinate CTP.

The protein belongs to the tRNA nucleotidyltransferase/poly(A) polymerase family. Bacterial CCA-adding enzyme type 2 subfamily. The cofactor is Mg(2+).

It catalyses the reaction a tRNA precursor + 2 CTP + ATP = a tRNA with a 3' CCA end + 3 diphosphate. It carries out the reaction a tRNA with a 3' CCA end + 2 CTP + ATP = a tRNA with a 3' CCACCA end + 3 diphosphate. Its function is as follows. Catalyzes the addition and repair of the essential 3'-terminal CCA sequence in tRNAs without using a nucleic acid template. Adds these three nucleotides in the order of C, C, and A to the tRNA nucleotide-73, using CTP and ATP as substrates and producing inorganic pyrophosphate. tRNA 3'-terminal CCA addition is required both for tRNA processing and repair. Also involved in tRNA surveillance by mediating tandem CCA addition to generate a CCACCA at the 3' terminus of unstable tRNAs. While stable tRNAs receive only 3'-terminal CCA, unstable tRNAs are marked with CCACCA and rapidly degraded. This Francisella tularensis subsp. novicida (strain U112) protein is CCA-adding enzyme.